Reading from the N-terminus, the 318-residue chain is NADH-ubiquinone oxidoreductase chain 1 (318 aa).

Transmembrane regions (helical) follow at residues 2 to 22 (FLMN…FLTL), 70 to 90 (MFIL…IPMP), 100 to 120 (LGVL…LWSG), 136 to 156 (VAQT…IMML), 171 to 191 (HLWL…STLA), 231 to 251 (IIMM…NPLF), 253 to 273 (ELFT…FLWV), and 294 to 314 (LPLT…LAGI).

Belongs to the complex I subunit 1 family.

Its subcellular location is the mitochondrion inner membrane. The catalysed reaction is a ubiquinone + NADH + 5 H(+)(in) = a ubiquinol + NAD(+) + 4 H(+)(out). Its function is as follows. Core subunit of the mitochondrial membrane respiratory chain NADH dehydrogenase (Complex I) that is believed to belong to the minimal assembly required for catalysis. Complex I functions in the transfer of electrons from NADH to the respiratory chain. The immediate electron acceptor for the enzyme is believed to be ubiquinone. This Priodontes maximus (Giant armadillo) protein is NADH-ubiquinone oxidoreductase chain 1 (MT-ND1).